A 372-amino-acid chain; its full sequence is Spermidine/putrescine import ATP-binding protein PotA (372 aa).

Residues 11–241 (IELRSIKKSY…PANLFVARFI (231 aa)) form the ABC transporter domain. 43–50 (GPSGCGKT) contributes to the ATP binding site.

The protein belongs to the ABC transporter superfamily. Spermidine/putrescine importer (TC 3.A.1.11.1) family. As to quaternary structure, the complex is composed of two ATP-binding proteins (PotA), two transmembrane proteins (PotB and PotC) and a solute-binding protein (PotD).

It is found in the cell inner membrane. It catalyses the reaction ATP + H2O + polyamine-[polyamine-binding protein]Side 1 = ADP + phosphate + polyamineSide 2 + [polyamine-binding protein]Side 1.. In terms of biological role, part of the ABC transporter complex PotABCD involved in spermidine/putrescine import. Responsible for energy coupling to the transport system. This is Spermidine/putrescine import ATP-binding protein PotA from Haemophilus influenzae (strain 86-028NP).